The primary structure comprises 657 residues: N-acetylgalactosaminyltransferase 7 (657 aa).

Residues 1–6 (MRLKIG) are Cytoplasmic-facing. A helical; Signal-anchor for type II membrane protein membrane pass occupies residues 7-29 (FILRSLLVVGSFLGLVVLWSSLT). Over 30–657 (PRPDDPSPLS…KWEMNNIHSV (628 aa)) the chain is Lumenal. Residues 31 to 66 (RPDDPSPLSRMREDRDVNDPMPNRGGNGLAPGEDRF) form a disordered region. Intrachain disulfides connect Cys-197–Cys-435, Cys-426–Cys-507, Cys-545–Cys-562, Cys-585–Cys-600, and Cys-625–Cys-640. Residues 206–317 (LLTSSVVIVF…VNWYAPLVAP (112 aa)) form a catalytic subdomain A region. 2 residues coordinate substrate: Asp-247 and Arg-277. Mn(2+) is bound by residues Asp-301 and His-303. Positions 381-443 (PYRSPAMAGG…PCSRVGHIYR (63 aa)) are catalytic subdomain B. Trp-412 lines the substrate pocket. Mn(2+) is bound at residue His-440. Arg-443 contributes to the substrate binding site. The Ricin B-type lectin domain maps to 532 to 652 (VDWGEIRGFE…SKTTQKWEMN (121 aa)).

Belongs to the glycosyltransferase 2 family. GalNAc-T subfamily. Requires Mn(2+) as cofactor.

The protein resides in the golgi apparatus membrane. The enzyme catalyses L-seryl-[protein] + UDP-N-acetyl-alpha-D-galactosamine = a 3-O-[N-acetyl-alpha-D-galactosaminyl]-L-seryl-[protein] + UDP + H(+). It carries out the reaction L-threonyl-[protein] + UDP-N-acetyl-alpha-D-galactosamine = a 3-O-[N-acetyl-alpha-D-galactosaminyl]-L-threonyl-[protein] + UDP + H(+). It functions in the pathway protein modification; protein glycosylation. Glycopeptide transferase involved in O-linked oligosaccharide biosynthesis, which catalyzes the transfer of an N-acetyl-D-galactosamine residue to an already glycosylated peptide. In contrast to other proteins of the family, it does not act as a peptide transferase that transfers GalNAc onto serine or threonine residue on the protein receptor, but instead requires the prior addition of a GalNAc on a peptide before adding additional GalNAc moieties. Some peptide transferase activity is however not excluded, considering that its appropriate peptide substrate may remain unidentified. The sequence is that of N-acetylgalactosaminyltransferase 7 (GALNT7) from Pongo abelii (Sumatran orangutan).